We begin with the raw amino-acid sequence, 185 residues long: Photosystem I assembly protein Ycf4 (185 aa).

The next 2 membrane-spanning stretches (helical) occupy residues 24–44 (YIIGGMLTIGGIGFLLASISS) and 66–86 (IIMGAYGVIANLLNFYLWYLV).

This sequence belongs to the Ycf4 family.

Its subcellular location is the cellular thylakoid membrane. Seems to be required for the assembly of the photosystem I complex. This Prochlorococcus marinus (strain AS9601) protein is Photosystem I assembly protein Ycf4.